The sequence spans 195 residues: Pyruvoyl-dependent arginine decarboxylase AaxB (195 aa).

Ser53 carries the pyruvic acid (Ser) modification.

This sequence belongs to the pyruvoyl-dependent arginine decarboxylase family. As to quaternary structure, trimer of an alpha-beta dimer. Pyruvate is required as a cofactor.

It localises to the cytoplasm. The catalysed reaction is L-arginine + H(+) = agmatine + CO2. Its function is as follows. Part of the AaxABC system, catalyzes the decarboxylation of L-arginine. The arginine uptake by the bacterium in the macrophage may be a virulence factor against the host innate immune response. This chain is Pyruvoyl-dependent arginine decarboxylase AaxB (aaxB), found in Chlamydia trachomatis serovar L2 (strain ATCC VR-902B / DSM 19102 / 434/Bu).